The primary structure comprises 410 residues: Beta-arrestin-1 (410 aa).

The tract at residues 1–163 (MGDKGTRVFK…LEEKIHKRNS (163 aa)) is interaction with SRC. The interval 45-86 (PEYLKERRVYVTLTCAFRYGREDLDVLGLTFRKDLFVANVQS) is interaction with CHRM2. Residue Tyr-47 is modified to Phosphotyrosine. 1D-myo-inositol hexakisphosphate contacts are provided by Lys-250, Met-255, Lys-324, and Lys-326. An interaction with TRAF6 region spans residues 318 to 410 (IVSYKVKVKL…GTGSPQLNNR (93 aa)). The [DE]-X(1,2)-F-X-X-[FL]-X-X-X-R motif signature appears at 385 to 395 (RQRLKGMKDDK). Residues 389-410 (KGMKDDKEEEENGTGSPQLNNR) form a disordered region. The span at 401-410 (GTGSPQLNNR) shows a compositional bias: polar residues. Ser-404 is subject to Phosphoserine; by GRK5.

This sequence belongs to the arrestin family. As to quaternary structure, monomer. Homodimer. Homooligomer; the self-association is mediated by InsP6-binding. Heterooligomer with ARRB2; the association is mediated by InsP6-binding. Interacts with ADRB2 (phosphorylated). Interacts with CHRM2 (phosphorylated). Interacts with LHCGR. Interacts with CYTH2 and CASR. Interacts with AP2B1 (dephosphorylated); phosphorylation of AP2B1 disrupts the interaction. Interacts (dephosphorylated at Ser-404) with CLTC. Interacts with CCR2 and GRK2. Interacts with CRR5. Interacts with PTAFR (phosphorylated on serine residues). Interacts with CLTC and MAP2K3. Interacts with CREB1. Interacts with TRAF6. Interacts with IGF1R and MDM2. Interacts with C5AR1. Interacts with PDE4D. Interacts with SRC (via the SH3 domain and the protein kinase domain); the interaction is independent of the phosphorylation state of SRC C-terminus. Interacts with TACR1. Interacts with RAF1. Interacts with CHUK, IKBKB and MAP3K14. Interacts with DVL1; the interaction is enhanced by phosphorylation of DVL1. Interacts with DVL2; the interaction is enhanced by phosphorylation of DVL2. Interacts with IGF1R. Associates with MAP kinase p38. Part of a MAPK signaling complex consisting of TACR1, ARRB1, SRC, MAPK1 (activated) and MAPK3 (activated). Part of a MAPK signaling complex consisting of F2RL1, ARRB1, RAF1, MAPK1 (activated) and MAPK3 (activated). Interacts with GPR143. Interacts with MAP2K4/MKK4. Interacts with HCK and CXCR1 (phosphorylated). Interacts with ACKR3 and ACKR4. Interacts with ARRDC1; the interaction is direct. Interacts with GPR61, GPR62 and GPR135. Constitutively phosphorylated at in the cytoplasm. At the plasma membrane, is rapidly dephosphorylated, a process that is required for clathrin binding and ADRB2 endocytosis but not for ADRB2 binding and desensitization. Once internalized, is rephosphorylated. Post-translationally, the ubiquitination status appears to regulate the formation and trafficking of beta-arrestin-GPCR complexes and signaling. Ubiquitination appears to occur GPCR-specific. Ubiquitinated by MDM2; the ubiquitination is required for rapid internalization of ADRB2. Deubiquitinated by USP33; the deubiquitination leads to a dissociation of the beta-arrestin-GPCR complex. Stimulation of a class A GPCR, such as ADRB2, induces transient ubiquitination and subsequently promotes association with USP33.

The protein resides in the cytoplasm. It is found in the nucleus. Its subcellular location is the cell membrane. It localises to the membrane. The protein localises to the clathrin-coated pit. The protein resides in the cell projection. It is found in the pseudopodium. Its subcellular location is the cytoplasmic vesicle. Functionally, functions in regulating agonist-mediated G-protein coupled receptor (GPCR) signaling by mediating both receptor desensitization and resensitization processes. During homologous desensitization, beta-arrestins bind to the GPRK-phosphorylated receptor and sterically preclude its coupling to the cognate G-protein; the binding appears to require additional receptor determinants exposed only in the active receptor conformation. The beta-arrestins target many receptors for internalization by acting as endocytic adapters (CLASPs, clathrin-associated sorting proteins) and recruiting the GPRCs to the adapter protein 2 complex 2 (AP-2) in clathrin-coated pits (CCPs). However, the extent of beta-arrestin involvement appears to vary significantly depending on the receptor, agonist and cell type. Internalized arrestin-receptor complexes traffic to intracellular endosomes, where they remain uncoupled from G-proteins. Two different modes of arrestin-mediated internalization occur. Class A receptors, like ADRB2, OPRM1, ENDRA, D1AR and ADRA1B dissociate from beta-arrestin at or near the plasma membrane and undergo rapid recycling. Class B receptors, like AVPR2, AGTR1, NTSR1, TRHR and TACR1 internalize as a complex with arrestin and traffic with it to endosomal vesicles, presumably as desensitized receptors, for extended periods of time. Receptor resensitization then requires that receptor-bound arrestin is removed so that the receptor can be dephosphorylated and returned to the plasma membrane. Involved in internalization of P2RY4 and UTP-stimulated internalization of P2RY2. Involved in phosphorylation-dependent internalization of OPRD1 ands subsequent recycling. Involved in the degradation of cAMP by recruiting cAMP phosphodiesterases to ligand-activated receptors. Beta-arrestins function as multivalent adapter proteins that can switch the GPCR from a G-protein signaling mode that transmits short-lived signals from the plasma membrane via small molecule second messengers and ion channels to a beta-arrestin signaling mode that transmits a distinct set of signals that are initiated as the receptor internalizes and transits the intracellular compartment. Acts as a signaling scaffold for MAPK pathways such as MAPK1/3 (ERK1/2). ERK1/2 activated by the beta-arrestin scaffold is largely excluded from the nucleus and confined to cytoplasmic locations such as endocytic vesicles, also called beta-arrestin signalosomes. Recruits c-Src/SRC to ADRB2 resulting in ERK activation. GPCRs for which the beta-arrestin-mediated signaling relies on both ARRB1 and ARRB2 (codependent regulation) include ADRB2, F2RL1 and PTH1R. For some GPCRs the beta-arrestin-mediated signaling relies on either ARRB1 or ARRB2 and is inhibited by the other respective beta-arrestin form (reciprocal regulation). Inhibits ERK1/2 signaling in AGTR1- and AVPR2-mediated activation (reciprocal regulation). Is required for SP-stimulated endocytosis of NK1R and recruits c-Src/SRC to internalized NK1R resulting in ERK1/2 activation, which is required for the antiapoptotic effects of SP. Is involved in proteinase-activated F2RL1-mediated ERK activity. Acts as a signaling scaffold for the AKT1 pathway. Is involved in alpha-thrombin-stimulated AKT1 signaling. Is involved in IGF1-stimulated AKT1 signaling leading to increased protection from apoptosis. Involved in activation of the p38 MAPK signaling pathway and in actin bundle formation. Involved in F2RL1-mediated cytoskeletal rearrangement and chemotaxis. Involved in AGTR1-mediated stress fiber formation by acting together with GNAQ to activate RHOA. Appears to function as signaling scaffold involved in regulation of MIP-1-beta-stimulated CCR5-dependent chemotaxis. Involved in attenuation of NF-kappa-B-dependent transcription in response to GPCR or cytokine stimulation by interacting with and stabilizing CHUK. May serve as nuclear messenger for GPCRs. Involved in OPRD1-stimulated transcriptional regulation by translocating to CDKN1B and FOS promoter regions and recruiting EP300 resulting in acetylation of histone H4. Involved in regulation of LEF1 transcriptional activity via interaction with DVL1 and/or DVL2 Also involved in regulation of receptors other than GPCRs. Involved in Toll-like receptor and IL-1 receptor signaling through the interaction with TRAF6 which prevents TRAF6 autoubiquitination and oligomerization required for activation of NF-kappa-B and JUN. Involved in IL8-mediated granule release in neutrophils. Binds phosphoinositides. Binds inositolhexakisphosphate (InsP6). Required for atypical chemokine receptor ACKR2-induced RAC1-LIMK1-PAK1-dependent phosphorylation of cofilin (CFL1) and for the up-regulation of ACKR2 from endosomal compartment to cell membrane, increasing its efficiency in chemokine uptake and degradation. Involved in the internalization of the atypical chemokine receptor ACKR3. Negatively regulates the NOTCH signaling pathway by mediating the ubiquitination and degradation of NOTCH1 by ITCH. Participates in the recruitment of the ubiquitin-protein ligase to the receptor. In Macaca fascicularis (Crab-eating macaque), this protein is Beta-arrestin-1 (ARRB1).